The following is a 414-amino-acid chain: Serine/threonine transporter SstT (414 aa).

Topologically, residues 2–15 are cytoplasmic; it reads TTQRSPGLFRRLAH. The chain crosses the membrane as a helical span at residues 16–36; the sequence is GSLVKQILVGLVLGILLAWIS. At 37–45 the chain is on the periplasmic side; it reads KPAAEAVGL. Residues 46-66 form a helical membrane-spanning segment; it reads LGTLFVGALKAVAPILVLMLV. Over 67–83 the chain is Cytoplasmic; that stretch reads MASIANHQHGQKTNIRP. Residues 84 to 104 traverse the membrane as a helical segment; it reads ILFLYLLGTFSAALAAVVFSF. At 105-142 the chain is on the periplasmic side; sequence AFPSTLHLSSSAGDISPPSGIVEVMRGLVMSMVSNPID. The chain crosses the membrane as a helical span at residues 143–163; sequence ALLKGNYIGILVWAIGLGFAL. At 164-179 the chain is on the cytoplasmic side; the sequence is RHGNETTKNLVNDLSN. The chain crosses the membrane as a helical span at residues 180–200; that stretch reads AVTFMVKLVIRFAPIGIFGLV. Topologically, residues 201–217 are periplasmic; the sequence is SSTLATTGFSTLWGYAQ. Residues 218-238 traverse the membrane as a helical segment; that stretch reads LLVVLVGCMLLVALVVNPLLV. Residues 239–299 are Cytoplasmic-facing; the sequence is WWKIRRNPFP…VSIPLGATIN (61 aa). The chain crosses the membrane as a helical span at residues 300–320; that stretch reads MAGAAITITVLTLAAVNTLGI. Residues 321–331 lie on the Periplasmic side of the membrane; it reads PVDLPTALLLS. The chain crosses the membrane as a helical span at residues 332-352; it reads VVASLCACGASGVAGGSLLLI. Residues 353 to 414 lie on the Cytoplasmic side of the membrane; that stretch reads PLACNMFGIS…DRLANSALRN (62 aa).

The protein belongs to the dicarboxylate/amino acid:cation symporter (DAACS) (TC 2.A.23) family.

Its subcellular location is the cell inner membrane. It catalyses the reaction L-serine(in) + Na(+)(in) = L-serine(out) + Na(+)(out). The enzyme catalyses L-threonine(in) + Na(+)(in) = L-threonine(out) + Na(+)(out). Involved in the import of serine and threonine into the cell, with the concomitant import of sodium (symport system). The protein is Serine/threonine transporter SstT of Shigella boydii serotype 4 (strain Sb227).